Here is a 163-residue protein sequence, read N- to C-terminus: General stress protein 16O (163 aa).

The segment covering 19–30 (QKELSGEKKETE) has biased composition (basic and acidic residues). 2 disordered regions span residues 19–55 (QKELSGEKKETESMTEEVGELSNGVDNHMADHGTLVT) and 115–163 (ADVE…QDSK). Residues 89–123 (CEKTGQEIPYERLEAVPYARMTVEAQADVEDDLET) form a dksA C4-type; degenerate zinc finger. The span at 127–146 (SYEREFHEQVKDLSNKETID) shows a compositional bias: basic and acidic residues.

The chain is General stress protein 16O (yocK) from Bacillus subtilis (strain 168).